The chain runs to 386 residues: D-amino-acid oxidase (386 aa).

Residues Gly-14, Gly-15, Val-16, Val-17, Glu-39, Arg-40, Ala-51, Gly-52, and Gly-53 each coordinate FAD. Residues 109-138 form a disordered region; it reads SSSPPHPLLPPWVDPSASAAPPRELGTPDT. Residues 112–121 are compositionally biased toward pro residues; sequence PPHPLLPPWV. Positions 174, 175, and 176 each coordinate FAD. D-serine is bound by residues Tyr-253, Tyr-261, and Lys-332. Positions 261 and 332 each coordinate D-proline. FAD-binding residues include Lys-332, Gly-344, Ile-345, Gly-362, and Ala-364. Lys-332 contributes to the D-dopa binding site. Residue Gly-362 participates in D-serine binding. A D-proline-binding site is contributed by Gly-362. Gly-362 lines the D-dopa pocket.

Belongs to the DAMOX/DASOX family.

It carries out the reaction a D-alpha-amino acid + O2 + H2O = a 2-oxocarboxylate + H2O2 + NH4(+). The enzyme catalyses D-alanine + O2 + H2O = pyruvate + H2O2 + NH4(+). It catalyses the reaction D-aspartate + O2 + H2O = oxaloacetate + H2O2 + NH4(+). Catalyzes the oxidative deamination of D-amino acids with broad substrate specificity. Enables the organism to utilize D-amino acids as a source of nutrients. The chain is D-amino-acid oxidase from Zea mays (Maize).